A 110-amino-acid polypeptide reads, in one-letter code: UPF0060 membrane protein Psyc_0916 (110 aa).

The next 4 helical transmembrane spans lie at 7–27, 33–53, 63–83, and 87–107; these read VGLF…PYLW, SIWL…LLSL, AAYG…VNGI, and TWDI…MFAP.

Belongs to the UPF0060 family.

Its subcellular location is the cell inner membrane. The protein is UPF0060 membrane protein Psyc_0916 of Psychrobacter arcticus (strain DSM 17307 / VKM B-2377 / 273-4).